Reading from the N-terminus, the 488-residue chain is GTPase Der (488 aa).

EngA-type G domains are found at residues 3–166 (PVVA…VSDG) and 201–374 (IKLA…QCAT). Residues 9–16 (GRPNVGKS), 56–60 (DTGGI), 118–121 (NKTD), 207–214 (GRPNVGKS), 254–258 (DTAGV), and 319–322 (NKWD) contribute to the GTP site. The region spanning 375–459 (KRVSTALLTR…PIRIQFNEGA (85 aa)) is the KH-like domain.

This sequence belongs to the TRAFAC class TrmE-Era-EngA-EngB-Septin-like GTPase superfamily. EngA (Der) GTPase family. In terms of assembly, associates with the 50S ribosomal subunit.

Functionally, GTPase that plays an essential role in the late steps of ribosome biogenesis. In Sodalis glossinidius (strain morsitans), this protein is GTPase Der.